We begin with the raw amino-acid sequence, 280 residues long: Meiotic spindle formation protein 2 (280 aa).

Positions 1–104 (MSGLDDRKKL…LPKSSPESSV (104 aa)) are disordered. Positions 72-92 (LHSESKKELSRNPVSRGEEHS) are enriched in basic and acidic residues. Over residues 93–104 (SSLPKSSPESSV) the composition is skewed to low complexity.

In terms of assembly, interacts with mei-1.

Its subcellular location is the cytoplasm. The protein resides in the cytoskeleton. The protein localises to the spindle pole. Functionally, forms a heterodimeric complex in conjunction with mei-1 which severs microtubules in vitro in an ATP-dependent manner. This activity may promote rapid reorganization of cellular microtubule arrays. May act to target mei-1 within the cell. Required specifically for meiotic spindle formation in the female germline. This chain is Meiotic spindle formation protein 2 (mei-2), found in Caenorhabditis elegans.